An 837-amino-acid polypeptide reads, in one-letter code: Outer membrane usher protein HifC (837 aa).

A signal peptide spans 1-26 (MKTKNFPLNKIAFACTLLLANPVAWA). Cys-813 and Cys-833 form a disulfide bridge.

It belongs to the fimbrial export usher family.

The protein resides in the cell outer membrane. In terms of biological role, essential for piliation. This Haemophilus influenzae protein is Outer membrane usher protein HifC (hifC).